The following is a 95-amino-acid chain: Protein TusB (95 aa).

It belongs to the DsrH/TusB family. As to quaternary structure, heterohexamer, formed by a dimer of trimers. The hexameric TusBCD complex contains 2 copies each of TusB, TusC and TusD. The TusBCD complex interacts with TusE.

It localises to the cytoplasm. In terms of biological role, part of a sulfur-relay system required for 2-thiolation of 5-methylaminomethyl-2-thiouridine (mnm(5)s(2)U) at tRNA wobble positions. This chain is Protein TusB, found in Yersinia pseudotuberculosis serotype O:1b (strain IP 31758).